The chain runs to 152 residues: Transcriptional repressor NrdR (152 aa).

Residues 3–34 (CPYCNASETKVIDSRLAAEGAQVRRRRSCNSC) fold into a zinc finger. Positions 49–139 (PRIIKSSGKI…VYRDFQDIDA (91 aa)) constitute an ATP-cone domain.

Belongs to the NrdR family. The cofactor is Zn(2+).

In terms of biological role, negatively regulates transcription of bacterial ribonucleotide reductase nrd genes and operons by binding to NrdR-boxes. This is Transcriptional repressor NrdR from Psychrobacter cryohalolentis (strain ATCC BAA-1226 / DSM 17306 / VKM B-2378 / K5).